Here is a 266-residue protein sequence, read N- to C-terminus: MAYKEVTRDELSAAGVQYGHQTKRWNPKMAPFIYGSKSKNHVIDLEKTLIQLRQAEKLVQSIGAKGEKVLFVGTRRSAKLAVKEAALRSGNYYVNQRWLGGTLTNFKTIVKRIKALWEIEESEKNGQLALRTKKEQILILKEKANLEKSLGGIKQMRKLPAALIVVDPKSDEIAVKEAIKLNIPVIGLCDTNVDPDIVTLPIPANDDLQESVNIMINALVDAFADGANLKLAPSVLKTVVVKRERTEGENNYSNNRSWNKPERTNN.

Positions 247-266 (EGENNYSNNRSWNKPERTNN) are disordered. Polar residues predominate over residues 249 to 258 (ENNYSNNRSW).

The protein belongs to the universal ribosomal protein uS2 family.

The sequence is that of Small ribosomal subunit protein uS2 from Mesoplasma florum (strain ATCC 33453 / NBRC 100688 / NCTC 11704 / L1) (Acholeplasma florum).